We begin with the raw amino-acid sequence, 470 residues long: Ribosomal protein uS12 methylthiotransferase RimO (470 aa).

Positions 20–131 (PTVAFAHLGC…IVEVLQQVEA (112 aa)) constitute an MTTase N-terminal domain. 6 residues coordinate [4Fe-4S] cluster: Cys-29, Cys-65, Cys-94, Cys-169, Cys-173, and Cys-176. The 230-residue stretch at 155 to 384 (TTGEAVAYLK…MTLQQPISAA (230 aa)) folds into the Radical SAM core domain. Residues 387 to 458 (ASWIGKTVDV…IYDLSGHVVS (72 aa)) enclose the TRAM domain.

It belongs to the methylthiotransferase family. RimO subfamily. It depends on [4Fe-4S] cluster as a cofactor.

Its subcellular location is the cytoplasm. The enzyme catalyses L-aspartate(89)-[ribosomal protein uS12]-hydrogen + (sulfur carrier)-SH + AH2 + 2 S-adenosyl-L-methionine = 3-methylsulfanyl-L-aspartate(89)-[ribosomal protein uS12]-hydrogen + (sulfur carrier)-H + 5'-deoxyadenosine + L-methionine + A + S-adenosyl-L-homocysteine + 2 H(+). Catalyzes the methylthiolation of an aspartic acid residue of ribosomal protein uS12. The chain is Ribosomal protein uS12 methylthiotransferase RimO from Synechococcus sp. (strain CC9311).